Reading from the N-terminus, the 296-residue chain is Bifunctional protein FolD (296 aa).

Residues Gly166–Ser168, Ser195, and Ile236 contribute to the NADP(+) site.

This sequence belongs to the tetrahydrofolate dehydrogenase/cyclohydrolase family. In terms of assembly, homodimer.

It carries out the reaction (6R)-5,10-methylene-5,6,7,8-tetrahydrofolate + NADP(+) = (6R)-5,10-methenyltetrahydrofolate + NADPH. The catalysed reaction is (6R)-5,10-methenyltetrahydrofolate + H2O = (6R)-10-formyltetrahydrofolate + H(+). Its pathway is one-carbon metabolism; tetrahydrofolate interconversion. Functionally, catalyzes the oxidation of 5,10-methylenetetrahydrofolate to 5,10-methenyltetrahydrofolate and then the hydrolysis of 5,10-methenyltetrahydrofolate to 10-formyltetrahydrofolate. The polypeptide is Bifunctional protein FolD (Chlorobium limicola (strain DSM 245 / NBRC 103803 / 6330)).